A 156-amino-acid chain; its full sequence is MSRRTVAKKRPVAPDPVYQSRLVSLLVSHLLKKGKKSIAYNIFYAAMKNIAETTSQDPLEVLRQAVLNITPKVEVKSRRVGGATLQVPLEVKADRGTALALRWLLIAARNRSGRNMVSKLSAEIIDASNNTGAAIRRREETHRMAEANKAFAHFRF.

The protein belongs to the universal ribosomal protein uS7 family. In terms of assembly, part of the 30S ribosomal subunit.

The protein localises to the plastid. It is found in the chloroplast. One of the primary rRNA binding proteins, it binds directly to 16S rRNA where it nucleates assembly of the head domain of the 30S subunit. The sequence is that of Small ribosomal subunit protein uS7c (rps7) from Ostreococcus tauri.